Reading from the N-terminus, the 308-residue chain is Probable manganese-dependent inorganic pyrophosphatase (308 aa).

Mn(2+) contacts are provided by His-9, Asp-13, Asp-15, Asp-74, His-96, and Asp-148.

This sequence belongs to the PPase class C family. Requires Mn(2+) as cofactor.

The protein localises to the cytoplasm. It carries out the reaction diphosphate + H2O = 2 phosphate + H(+). This chain is Probable manganese-dependent inorganic pyrophosphatase, found in Oceanobacillus iheyensis (strain DSM 14371 / CIP 107618 / JCM 11309 / KCTC 3954 / HTE831).